Here is a 440-residue protein sequence, read N- to C-terminus: Protein eva-1 homolog C (440 aa).

Residues 1–13 show a composition bias toward pro residues; sequence MLLPGHPRPPPAP. The segment at 1–23 is disordered; the sequence is MLLPGHPRPPPAPQSAQNQGLRR. The signal sequence occupies residues 1–48; that stretch reads MLLPGHPRPPPAPQSAQNQGLRRQVEPPGQLLRLFYCTVLVCSKETSA. At 49-321 the chain is on the extracellular side; the sequence is LTDFSGYLTK…AYIRAHPERA (273 aa). 3 N-linked (GlcNAc...) asparagine glycosylation sites follow: Asn62, Asn109, and Asn165. In terms of domain architecture, SUEL-type lectin 1 spans 67 to 159; that stretch reads ACDGDYLNLQ…KYLLVSFKCQ (93 aa). An SUEL-type lectin 2 domain is found at 168-260; the sequence is VCENQELKLH…KYLTVAYACV (93 aa). A helical membrane pass occupies residues 322–342; sequence ALLFMSSVCIGLLLTLCALVI. The Cytoplasmic portion of the chain corresponds to 343–440; it reads RVSCTKDFRE…SLPRNVGHFY (98 aa). Residues 364–384 are disordered; it reads SDKAEEDSEEDLEEEDSSDSQ. Over residues 367–381 the composition is skewed to acidic residues; it reads AEEDSEEDLEEEDSS.

Belongs to the EVA1 family. Ubiquitous.

It is found in the cell membrane. Functionally, binds heparin. In Mus musculus (Mouse), this protein is Protein eva-1 homolog C (Eva1c).